Reading from the N-terminus, the 160-residue chain is UPF0262 protein Oant_0325 (160 aa).

The protein belongs to the UPF0262 family.

In Brucella anthropi (strain ATCC 49188 / DSM 6882 / CCUG 24695 / JCM 21032 / LMG 3331 / NBRC 15819 / NCTC 12168 / Alc 37) (Ochrobactrum anthropi), this protein is UPF0262 protein Oant_0325.